The chain runs to 300 residues: uncharacterized protein (300 aa).

10 consecutive transmembrane segments (helical) span residues 4-24, 31-51, 68-88, 95-115, 120-140, 146-166, 177-197, 214-234, 242-262, and 272-292; these read IIIIMLFFLVSITWGTTWIAM, IPPFFATGIRFLAASPLLIIL, FQIFISIFYFSIPFTLMLYGG, ISSIIFANMPVLVLIISHFYL, NFIQKVGMVIALITLFFVLLI, CFFQWKGILALLLALLSHAVI, VSVITFNALPSLISGIFLSII, ILAVFYLGNFCGICGILSYFY, FYASIVFLIFPLIAGFLEIYI, and LWFIIPSGLGILLTLIPINFF. EamA domains follow at residues 15–139 and 161–287; these read ITWG…FVLL and LSHA…LTLI.

This sequence belongs to the EamA transporter family.

Its subcellular location is the cell membrane. This is an uncharacterized protein from Buchnera aphidicola subsp. Schizaphis graminum (strain Sg).